Here is a 478-residue protein sequence, read N- to C-terminus: METDTGALPKKQDFSEWYNEILWRAEIMDVRYPVKGLYVWFPYGFAIRKFVYQHLRELLDRDHKETLFPLLIPEQEFMKEAEHIKGFEDEVYWVTHGGTTPLEVKLALRPTSETAIYPMFALWVRSHADLPIKIYQIVNTFRYETKQTRPLIRLREITSFMESHTVHATWDEAEIQVESEIALTREFYRNLCIPIIISKRPDWDKFPGADYTIAVDAIMPNGKTLQIGTVHHLGNHFSRTFNIQYEDKNGEQKEAYQTCYGISERCIAALISLHGDDKGLILPPTVATFQVVIVPITIGKRHEDVLAAAGKLKNDLENAGLRVTLDTRDLRPGAKYYWWEIRGVPLRLELGPRDLDSGKAMAVTRTGEKTTICLANAAEDTTSILTGITDAIRAKAGEHTKSHLCTTHTMDGLDIALNEGKVAVVHWCRDRTCGDTIEEKANSSLLGTEVRSEYIEATDGPCIICGKPGKATLVGRTY.

It belongs to the class-II aminoacyl-tRNA synthetase family. ProS type 3 subfamily. Homodimer.

The protein localises to the cytoplasm. It carries out the reaction tRNA(Pro) + L-proline + ATP = L-prolyl-tRNA(Pro) + AMP + diphosphate. Its function is as follows. Catalyzes the attachment of proline to tRNA(Pro) in a two-step reaction: proline is first activated by ATP to form Pro-AMP and then transferred to the acceptor end of tRNA(Pro). This is Proline--tRNA ligase from Methanoregula boonei (strain DSM 21154 / JCM 14090 / 6A8).